Consider the following 318-residue polypeptide: Apo-salmochelin esterase (318 aa).

Residues 13–32 (KAIFFHLSCLTLICSAQVYA) form a helical membrane-spanning segment. Residues S189 and H287 contribute to the active site.

The protein belongs to the esterase D family. As to quaternary structure, monomer.

The protein resides in the cell inner membrane. The catalysed reaction is enterobactin + H2O = N-(2,3-dihydroxybenzoyl)-L-serine trimer. The enzyme catalyses monoglucosyl-enterobactin + H2O = [N-(2,3-dihydroxybenzoyl)-L-seryl]2-N-(C-5-[deoxy-beta-D-glucosyl]-2,3-dihydroxybenzoyl)-L-serine + H(+). It carries out the reaction diglucosyl-enterobactin + H2O = N-(2,3-dihydroxybenzoyl)-L-seryl-[N-(C-5-[deoxy-beta-D-glucosyl]-2,3-dihydroxybenzoyl)-L-serine]2 + H(+). It catalyses the reaction triglucosyl-enterobactin + H2O = [N-(C-5-[deoxy-beta-D-glucosyl]-2,3-dihydroxybenzoyl)-L-serine]3 + H(+). Its function is as follows. Catalyzes the hydrolysis of both the apo and Fe3(+)-bound forms of enterobactin (Ent), monoglucosyl-C-Ent (MGE), diglucosyl-C-Ent (DGE) and triglucosyl-C-Ent (TGE). It prefers apo siderophores as substrates and hydrolyzes the Fe3(+)-bound siderophores very inefficiently. Tends to hydrolyze the trilactone just once to produce linearized trimers. May hydrolyze and linearize some or all of apo enterobactins while they are being exported. The chain is Apo-salmochelin esterase from Escherichia coli O6:H1 (strain CFT073 / ATCC 700928 / UPEC).